The primary structure comprises 396 residues: S-adenosylmethionine synthase (396 aa).

Histidine 16 provides a ligand contact to ATP. A Mg(2+)-binding site is contributed by aspartate 18. Position 44 (glutamate 44) interacts with K(+). Glutamate 57 and glutamine 100 together coordinate L-methionine. A flexible loop region spans residues 100-110; that stretch reads QSVDINQGVDR. ATP contacts are provided by residues 165–167, aspartate 240, 246–247, alanine 263, and lysine 267; these read DAK and RK. Residue aspartate 240 participates in L-methionine binding. Lysine 271 contributes to the L-methionine binding site.

It belongs to the AdoMet synthase family. Homotetramer; dimer of dimers. Requires Mg(2+) as cofactor. The cofactor is K(+).

The protein resides in the cytoplasm. The enzyme catalyses L-methionine + ATP + H2O = S-adenosyl-L-methionine + phosphate + diphosphate. It participates in amino-acid biosynthesis; S-adenosyl-L-methionine biosynthesis; S-adenosyl-L-methionine from L-methionine: step 1/1. Its function is as follows. Catalyzes the formation of S-adenosylmethionine (AdoMet) from methionine and ATP. The overall synthetic reaction is composed of two sequential steps, AdoMet formation and the subsequent tripolyphosphate hydrolysis which occurs prior to release of AdoMet from the enzyme. The sequence is that of S-adenosylmethionine synthase from Pseudomonas aeruginosa (strain UCBPP-PA14).